A 329-amino-acid chain; its full sequence is Ribosomal RNA small subunit methyltransferase C (329 aa).

This sequence belongs to the methyltransferase superfamily. RsmC family. As to quaternary structure, monomer.

It localises to the cytoplasm. The catalysed reaction is guanosine(1207) in 16S rRNA + S-adenosyl-L-methionine = N(2)-methylguanosine(1207) in 16S rRNA + S-adenosyl-L-homocysteine + H(+). Functionally, specifically methylates the guanine in position 1207 of 16S rRNA in the 30S particle. This chain is Ribosomal RNA small subunit methyltransferase C, found in Actinobacillus pleuropneumoniae serotype 5b (strain L20).